The sequence spans 179 residues: Large ribosomal subunit protein uL6 (179 aa).

It belongs to the universal ribosomal protein uL6 family. Part of the 50S ribosomal subunit.

In terms of biological role, this protein binds to the 23S rRNA, and is important in its secondary structure. It is located near the subunit interface in the base of the L7/L12 stalk, and near the tRNA binding site of the peptidyltransferase center. This chain is Large ribosomal subunit protein uL6, found in Acidothermus cellulolyticus (strain ATCC 43068 / DSM 8971 / 11B).